Here is a 1463-residue protein sequence, read N- to C-terminus: Nitric oxide synthase 1 (1463 aa).

An interaction with NOSIP region spans residues 1–200; it reads MESHMFSVQQ…LQGSGENNKL (200 aa). Positions 17-99 constitute a PDZ domain; that stretch reads SVRLFKRKVG…ETHVVLILRG (83 aa). 3 disordered regions span residues 110 to 194, 215 to 250, and 268 to 298; these read TFTG…LQGS, GKAI…LPLG, and VVLN…SKCP. The segment at 158-240 is DYNLL1/PIN/nNOS-inhibiting protein-binding; the sequence is PDPGQEASSL…VEVQVDRDPD (83 aa). The segment covering 226 to 243 has biased composition (basic and acidic residues); sequence TETKDVEVQVDRDPDSKS. Polar residues predominate over residues 280 to 294; that stretch reads PSASGKQSPTKNGSP. (6R)-L-erythro-5,6,7,8-tetrahydrobiopterin is bound at residue Ser-334. Heme b is bound at residue Cys-415. 4 residues coordinate L-arginine: Gln-478, Trp-587, Tyr-588, and Glu-592. (6R)-L-erythro-5,6,7,8-tetrahydrobiopterin is bound by residues Val-677, Trp-678, and Phe-691. Heme b is bound at residue Tyr-706. Residues 725-745 form a calmodulin-binding region; sequence KRRAIGFKKLAEAVKFSAKLM. In terms of domain architecture, Flavodoxin-like spans 755–969; it reads ATILYATETG…AFRTWAKKVF (215 aa). Positions 761, 762, 763, 765, 766, 807, 808, and 812 each coordinate FMN. Phosphoserine occurs at positions 881, 891, and 892. Ser-920, His-925, Cys-927, Glu-953, and Gln-957 together coordinate FMN. Residues 1024 to 1271 enclose the FAD-binding FR-type domain; sequence KRVSAARLLS…VRGAPSFHLP (248 aa). NADP(+) is bound at residue Arg-1044. Positions 1066, 1207, 1208, 1209, 1210, 1225, and 1227 each coordinate FAD. Ser-1230 is an NADP(+) binding site. Residues Tyr-1231, Val-1244, Cys-1245, and Ser-1246 each coordinate FAD. Residues Thr-1285, Arg-1318, Ser-1347, Arg-1348, Lys-1354, Tyr-1356, Gln-1358, Asp-1391, Thr-1432, and Arg-1434 each contribute to the NADP(+) site.

The protein belongs to the NOS family. Homodimer. Interacts with DLG4; the interaction possibly being prevented by the association between NOS1 and CAPON. Forms a ternary complex with CAPON and RASD1. Forms a ternary complex with CAPON and SYN1. Interacts with ZDHHC23. Interacts with NOSIP; which may impair its synaptic location. Interacts with HTR4. Interacts with SLC6A4. Interacts with VAC14. Interacts (via N-terminal domain) with DLG4 (via N-terminal tandem pair of PDZ domains). Interacts with SLC6A4. Forms a complex with ASL, ASS1 and SLC7A1; the complex regulates cell-autonomous L-arginine synthesis and citrulline recycling while channeling extracellular L-arginine to nitric oxide synthesis pathway. Interacts with DMD; localizes NOS1 to sarcolemma in muscle cells. Interacts with DYNLL1; inhibits the nitric oxide synthase activity. Requires heme b as cofactor. It depends on FAD as a cofactor. FMN serves as cofactor. (6R)-L-erythro-5,6,7,8-tetrahydrobiopterin is required as a cofactor. In terms of processing, ubiquitinated; mediated by STUB1/CHIP in the presence of Hsp70 and Hsp40 (in vitro).

It is found in the cell membrane. Its subcellular location is the sarcolemma. The protein localises to the cell projection. The protein resides in the dendritic spine. The catalysed reaction is 2 L-arginine + 3 NADPH + 4 O2 + H(+) = 2 L-citrulline + 2 nitric oxide + 3 NADP(+) + 4 H2O. Stimulated by calcium/calmodulin. Inhibited by DYNLL1 that prevents the dimerization of the protein. Inhibited by NOSIP. Its function is as follows. Produces nitric oxide (NO) which is a messenger molecule with diverse functions throughout the body. In the brain and peripheral nervous system, NO displays many properties of a neurotransmitter. Probably has nitrosylase activity and mediates cysteine S-nitrosylation of cytoplasmic target proteins such SRR. The chain is Nitric oxide synthase 1 (NOS1) from Ovis aries (Sheep).